Here is a 60-residue protein sequence, read N- to C-terminus: Short neurotoxin 1 (60 aa).

Intrachain disulfides connect Cys-3/Cys-22, Cys-17/Cys-39, Cys-41/Cys-52, and Cys-53/Cys-58.

This sequence belongs to the three-finger toxin family. Short-chain subfamily. Type I alpha-neurotoxin sub-subfamily. In terms of tissue distribution, expressed by the venom gland.

The protein localises to the secreted. Functionally, binds to muscle nicotinic acetylcholine receptor (nAChR) and inhibit acetylcholine from binding to the receptor, thereby impairing neuromuscular transmission. The recombinant protein also barely blocks voltage-gated potassium channel Kv1.3/KCNA3 (2.71% inhibition at 60 nM of toxin). The chain is Short neurotoxin 1 from Hydrophis lapemoides (Persian gulf sea snake).